A 1216-amino-acid chain; its full sequence is FK506-binding protein 15 (1216 aa).

M1 is modified (N-acetylmethionine). 2 positions are modified to phosphoserine: S14 and S23. Positions 41–68 (YTAPKQPKKGQGTAAGNQTAPKPAPATT) are disordered. The segment covering 59 to 68 (TAPKPAPATT) has biased composition (low complexity). An important for function in growth cone organization region spans residues 71-168 (SSVLFATAVH…AVSFNKQVCV (98 aa)). K91 carries the N6-acetyllysine modification. The PPIase FKBP-type domain maps to 196 to 289 (GDSLEVAYTG…VFEVEVRRVK (94 aa)). Residues 292 to 357 (RDSGSDGHSV…QLTVNSNPDT (66 aa)) form a disordered region. Residues 303–322 (SRDSAAPSPIPASDSLSADP) show a composition bias toward low complexity. Residues S306, S310, S342, S344, and S617 each carry the phosphoserine modification. The segment covering 340-356 (SKSNSLSEQLTVNSNPD) has biased composition (polar residues). Coiled coils occupy residues 519–790 (MAVN…AAAE) and 820–865 (QQYR…RLEK). Residues 927–1216 (HQEEEEEEEE…DDDDDIGWLG (290 aa)) are disordered. Over residues 929–940 (EEEEEEEEEEEE) the composition is skewed to acidic residues. Phosphoserine is present on S948. Pro residues predominate over residues 954 to 964 (PATPGMPPAPP). A compositionally biased stretch (low complexity) spans 983–994 (TTPLPLQALPTP). S1018 bears the Phosphoserine mark. Residues 1036 to 1045 (TSIPPKPPGP) are compositionally biased toward pro residues. S1050 and S1091 each carry phosphoserine. Phosphothreonine is present on T1093. Residues S1108, S1153, S1157, S1159, and S1190 each carry the phosphoserine modification. Residue T1198 is modified to Phosphothreonine. Acidic residues predominate over residues 1202–1216 (GDDDDDDDDDIGWLG).

Belongs to the FKBP-type PPIase family. As to quaternary structure, interacts with WIP and actin. Interacts with TBC1D23. In terms of tissue distribution, expressed in brain, with highest levels in the granular cell layer of cerebellum and in the granule cell layer of dentate gyrus.

It localises to the cytoplasm. The protein resides in the cell projection. It is found in the axon. Its subcellular location is the early endosome. Its function is as follows. Involved in the transport of early endosomes at the level of transition between microfilament-based and microtubule-based movement. May be involved in the cytoskeletal organization of neuronal growth cones. Seems to be inactive as a PPIase. The protein is FK506-binding protein 15 (Fkbp15) of Mus musculus (Mouse).